The chain runs to 61 residues: Small ribosomal subunit protein uS14 (61 aa).

4 residues coordinate Zn(2+): cysteine 24, cysteine 27, cysteine 40, and cysteine 43.

Belongs to the universal ribosomal protein uS14 family. Zinc-binding uS14 subfamily. As to quaternary structure, part of the 30S ribosomal subunit. Contacts proteins S3 and S10. The cofactor is Zn(2+).

Its function is as follows. Binds 16S rRNA, required for the assembly of 30S particles and may also be responsible for determining the conformation of the 16S rRNA at the A site. In Borrelia duttonii (strain Ly), this protein is Small ribosomal subunit protein uS14.